Consider the following 626-residue polypeptide: Phosphomethylpyrimidine synthase (626 aa).

Over residues 92–106 (AREVKPEDNGLKGPD) the composition is skewed to basic and acidic residues. The segment at 92 to 117 (AREVKPEDNGLKGPDRSAGVPPFPNV) is disordered. Residues asparagine 219, methionine 248, tyrosine 277, histidine 313, 333–335 (SRG), 374–377 (DGLR), and glutamate 413 each bind substrate. Histidine 417 contacts Zn(2+). Tyrosine 440 provides a ligand contact to substrate. Residue histidine 481 coordinates Zn(2+). [4Fe-4S] cluster contacts are provided by cysteine 561, cysteine 564, and cysteine 569.

The protein belongs to the ThiC family. Homodimer. Requires [4Fe-4S] cluster as cofactor.

The catalysed reaction is 5-amino-1-(5-phospho-beta-D-ribosyl)imidazole + S-adenosyl-L-methionine = 4-amino-2-methyl-5-(phosphooxymethyl)pyrimidine + CO + 5'-deoxyadenosine + formate + L-methionine + 3 H(+). It functions in the pathway cofactor biosynthesis; thiamine diphosphate biosynthesis. In terms of biological role, catalyzes the synthesis of the hydroxymethylpyrimidine phosphate (HMP-P) moiety of thiamine from aminoimidazole ribotide (AIR) in a radical S-adenosyl-L-methionine (SAM)-dependent reaction. The polypeptide is Phosphomethylpyrimidine synthase (Novosphingobium aromaticivorans (strain ATCC 700278 / DSM 12444 / CCUG 56034 / CIP 105152 / NBRC 16084 / F199)).